We begin with the raw amino-acid sequence, 279 residues long: 3-methyl-2-oxobutanoate hydroxymethyltransferase (279 aa).

2 residues coordinate Mg(2+): D44 and D83. 3-methyl-2-oxobutanoate contacts are provided by residues 44-45 (DS), D83, and K113. E115 provides a ligand contact to Mg(2+). E182 functions as the Proton acceptor in the catalytic mechanism.

Belongs to the PanB family. As to quaternary structure, homodecamer; pentamer of dimers. Mg(2+) serves as cofactor.

Its subcellular location is the cytoplasm. It carries out the reaction 3-methyl-2-oxobutanoate + (6R)-5,10-methylene-5,6,7,8-tetrahydrofolate + H2O = 2-dehydropantoate + (6S)-5,6,7,8-tetrahydrofolate. It participates in cofactor biosynthesis; (R)-pantothenate biosynthesis; (R)-pantoate from 3-methyl-2-oxobutanoate: step 1/2. In terms of biological role, catalyzes the reversible reaction in which hydroxymethyl group from 5,10-methylenetetrahydrofolate is transferred onto alpha-ketoisovalerate to form ketopantoate. This Desulfotalea psychrophila (strain LSv54 / DSM 12343) protein is 3-methyl-2-oxobutanoate hydroxymethyltransferase.